Here is a 333-residue protein sequence, read N- to C-terminus: Probable siderophore transport system permease protein YfiZ (333 aa).

Residues 1-31 form the signal peptide; sequence MICKKASSKWIVLVCLIFILLTAVCASVVYG. Transmembrane regions (helical) follow at residues 64 to 84, 94 to 114, 119 to 139, 152 to 172, 193 to 213, 246 to 266, 280 to 300, and 303 to 323; these read ALVA…MQAL, IFGI…FLHI, ALVW…YAAG, TLAG…LLSV, LDLL…CFFL, VMLA…GIII, WVLP…DIGA, and IIMP…MPVF.

Belongs to the binding-protein-dependent transport system permease family. FecCD subfamily. As to quaternary structure, the complex is composed of one ATP-binding protein (YusV), two transmembrane proteins (YfiZ and YfhA) and a solute-binding protein (YfiY).

It localises to the cell membrane. Its function is as follows. Part of the ABC transporter complex YfiYZ/YfhA/YusV involved in import of the iron-hydroxamate siderophores schizokinen, arthrobactin and corprogen. The chain is Probable siderophore transport system permease protein YfiZ (yfiZ) from Bacillus subtilis (strain 168).